The chain runs to 414 residues: Gamma-glutamyl phosphate reductase (414 aa).

It belongs to the gamma-glutamyl phosphate reductase family.

It is found in the cytoplasm. It carries out the reaction L-glutamate 5-semialdehyde + phosphate + NADP(+) = L-glutamyl 5-phosphate + NADPH + H(+). It participates in amino-acid biosynthesis; L-proline biosynthesis; L-glutamate 5-semialdehyde from L-glutamate: step 2/2. Functionally, catalyzes the NADPH-dependent reduction of L-glutamate 5-phosphate into L-glutamate 5-semialdehyde and phosphate. The product spontaneously undergoes cyclization to form 1-pyrroline-5-carboxylate. The sequence is that of Gamma-glutamyl phosphate reductase from Clostridium beijerinckii (strain ATCC 51743 / NCIMB 8052) (Clostridium acetobutylicum).